The sequence spans 633 residues: Threonine--tRNA ligase (633 aa).

The TGS domain occupies M1–T61. The interval D243 to P534 is catalytic. The Zn(2+) site is built by C334, H385, and H511.

It belongs to the class-II aminoacyl-tRNA synthetase family. As to quaternary structure, homodimer. Zn(2+) is required as a cofactor.

The protein resides in the cytoplasm. The enzyme catalyses tRNA(Thr) + L-threonine + ATP = L-threonyl-tRNA(Thr) + AMP + diphosphate + H(+). Its function is as follows. Catalyzes the attachment of threonine to tRNA(Thr) in a two-step reaction: L-threonine is first activated by ATP to form Thr-AMP and then transferred to the acceptor end of tRNA(Thr). Also edits incorrectly charged L-seryl-tRNA(Thr). The chain is Threonine--tRNA ligase from Stenotrophomonas maltophilia (strain R551-3).